Reading from the N-terminus, the 89-residue chain is Protein YxiC (89 aa).

This chain is Protein YxiC (yxiC), found in Bacillus subtilis (strain 168).